Consider the following 833-residue polypeptide: Coiled-coil domain-containing protein 110 (833 aa).

The stretch at 431–778 (LQNYLKESVQ…REYLNLSDKI (348 aa)) forms a coiled coil.

It is found in the nucleus. The chain is Coiled-coil domain-containing protein 110 (CCDC110) from Macaca fascicularis (Crab-eating macaque).